The sequence spans 184 residues: MSTSSSPYAAFAALLSSAGHSVSPAELHGLLLGRSCAGAGFDADAWLLDAADLLGGEPQDSVRQALIGLQEMVKGELCSEDMAVVLLLPDDETPLAQRAVALGQWCQGFLGGFGLTARDGALSAEAMEVLQDLSAIAQVQSALEESEDGENDYMEVMEYLRVAPLLLFTECAKPAAPAAKPSLH.

It belongs to the UPF0149 family.

The polypeptide is UPF0149 protein Pmen_0324 (Ectopseudomonas mendocina (strain ymp) (Pseudomonas mendocina)).